A 169-amino-acid chain; its full sequence is Large ribosomal subunit protein bL17 (169 aa).

Residues 124 to 169 form a disordered region; that stretch reads EKAVKRQDRSRRVKGSKKAIDEKTSDDSASVEAAPAAPEAEEKKDA. Residues 131 to 140 are compositionally biased toward basic residues; the sequence is DRSRRVKGSK. Low complexity predominate over residues 150–161; it reads DSASVEAAPAAP.

The protein belongs to the bacterial ribosomal protein bL17 family. Part of the 50S ribosomal subunit. Contacts protein L32.

The sequence is that of Large ribosomal subunit protein bL17 from Chloroherpeton thalassium (strain ATCC 35110 / GB-78).